Reading from the N-terminus, the 106-residue chain is Nucleoid-associated protein Smlt1015 (106 aa).

Residues 81–106 are disordered; the sequence is IDAESKSKMGSATAGMQLPPGMKLPF.

This sequence belongs to the YbaB/EbfC family. As to quaternary structure, homodimer.

The protein localises to the cytoplasm. The protein resides in the nucleoid. Its function is as follows. Binds to DNA and alters its conformation. May be involved in regulation of gene expression, nucleoid organization and DNA protection. This Stenotrophomonas maltophilia (strain K279a) protein is Nucleoid-associated protein Smlt1015.